Reading from the N-terminus, the 139-residue chain is D-ribose pyranase (139 aa).

His20 serves as the catalytic Proton donor. Residues Asp28, His106, and 128-130 (YAN) contribute to the substrate site.

It belongs to the RbsD / FucU family. RbsD subfamily. In terms of assembly, homodecamer.

The protein resides in the cytoplasm. The catalysed reaction is beta-D-ribopyranose = beta-D-ribofuranose. It participates in carbohydrate metabolism; D-ribose degradation; D-ribose 5-phosphate from beta-D-ribopyranose: step 1/2. Functionally, catalyzes the interconversion of beta-pyran and beta-furan forms of D-ribose. This Maridesulfovibrio salexigens (strain ATCC 14822 / DSM 2638 / NCIMB 8403 / VKM B-1763) (Desulfovibrio salexigens) protein is D-ribose pyranase.